Here is a 364-residue protein sequence, read N- to C-terminus: Rhomboid domain-containing protein 2 (364 aa).

Transmembrane regions (helical) follow at residues 11–31 (WCLC…SLLV), 63–83 (LVTY…AIII), 100–120 (CFFT…FEAV), 158–178 (FGMV…SWLI), and 184–204 (LSNV…CYSI). Disordered regions lie at residues 242 to 282 (AQSR…KLAS) and 317 to 364 (SSVY…VPMP). Composition is skewed to polar residues over residues 267–276 (HPVSQTQHAS) and 317–329 (SSVY…TSLG).

Belongs to the peptidase S54 family.

It is found in the golgi apparatus. Its subcellular location is the cis-Golgi network membrane. This chain is Rhomboid domain-containing protein 2 (RHBDD2), found in Homo sapiens (Human).